The primary structure comprises 379 residues: Chaperone protein DnaJ (379 aa).

In terms of domain architecture, J spans 5 to 70 (DYYESLGVAK…QKRAAYDQYG (66 aa)). The segment at 134–212 (GVTKEIRIPA…CHGHGRVEKS (79 aa)) adopts a CR-type zinc-finger fold. Zn(2+) is bound by residues cysteine 147, cysteine 150, cysteine 164, cysteine 167, cysteine 186, cysteine 189, cysteine 200, and cysteine 203. CXXCXGXG motif repeat units follow at residues 147-154 (CDVCHGNG), 164-171 (CPTCHGNG), 186-193 (CPHCHGRG), and 200-207 (CIKCHGHG).

Belongs to the DnaJ family. As to quaternary structure, homodimer. The cofactor is Zn(2+).

Its subcellular location is the cytoplasm. Functionally, participates actively in the response to hyperosmotic and heat shock by preventing the aggregation of stress-denatured proteins and by disaggregating proteins, also in an autonomous, DnaK-independent fashion. Unfolded proteins bind initially to DnaJ; upon interaction with the DnaJ-bound protein, DnaK hydrolyzes its bound ATP, resulting in the formation of a stable complex. GrpE releases ADP from DnaK; ATP binding to DnaK triggers the release of the substrate protein, thus completing the reaction cycle. Several rounds of ATP-dependent interactions between DnaJ, DnaK and GrpE are required for fully efficient folding. Also involved, together with DnaK and GrpE, in the DNA replication of plasmids through activation of initiation proteins. This Pectobacterium atrosepticum (strain SCRI 1043 / ATCC BAA-672) (Erwinia carotovora subsp. atroseptica) protein is Chaperone protein DnaJ.